A 397-amino-acid polypeptide reads, in one-letter code: Phosphoglycerate kinase (397 aa).

Residues 25–27 (DLN), arginine 41, 64–67 (HLGR), arginine 118, and arginine 151 contribute to the substrate site. ATP contacts are provided by residues lysine 202, glutamate 324, and 350–353 (GGDT).

The protein belongs to the phosphoglycerate kinase family. Monomer.

It is found in the cytoplasm. The enzyme catalyses (2R)-3-phosphoglycerate + ATP = (2R)-3-phospho-glyceroyl phosphate + ADP. Its pathway is carbohydrate degradation; glycolysis; pyruvate from D-glyceraldehyde 3-phosphate: step 2/5. The sequence is that of Phosphoglycerate kinase from Acidovorax sp. (strain JS42).